A 388-amino-acid polypeptide reads, in one-letter code: Fructose-bisphosphate aldolase, chloroplastic (388 aa).

Residues 1 to 38 (MASATLLKSSFLPKKSEWGATRQAAAPKPVTVSMVVRA) constitute a chloroplast transit peptide. Arg-72 contacts substrate. Glu-215 (proton acceptor) is an active-site residue. Lys-257 serves as the catalytic Schiff-base intermediate with dihydroxyacetone-P. Substrate is bound by residues 299–301 (SGG) and Arg-329.

Belongs to the class I fructose-bisphosphate aldolase family. Homotetramer. Expressed in leaf mesophyll cells.

The protein resides in the plastid. Its subcellular location is the chloroplast. It is found in the plastoglobule. It carries out the reaction beta-D-fructose 1,6-bisphosphate = D-glyceraldehyde 3-phosphate + dihydroxyacetone phosphate. Its pathway is carbohydrate degradation; glycolysis; D-glyceraldehyde 3-phosphate and glycerone phosphate from D-glucose: step 4/4. Its function is as follows. Plays a key role in glycolysis and gluconeogenesis. This Oryza sativa subsp. japonica (Rice) protein is Fructose-bisphosphate aldolase, chloroplastic.